The sequence spans 452 residues: Phosphoglucosamine mutase (452 aa).

The active-site Phosphoserine intermediate is S108. S108, D247, D249, and D251 together coordinate Mg(2+). S108 is subject to Phosphoserine.

Belongs to the phosphohexose mutase family. The cofactor is Mg(2+). In terms of processing, activated by phosphorylation.

It catalyses the reaction alpha-D-glucosamine 1-phosphate = D-glucosamine 6-phosphate. Catalyzes the conversion of glucosamine-6-phosphate to glucosamine-1-phosphate. The sequence is that of Phosphoglucosamine mutase from Paraburkholderia xenovorans (strain LB400).